We begin with the raw amino-acid sequence, 622 residues long: Apical membrane antigen 1 (622 aa).

Positions 1-24 (MRKLYCVLLLSAFEFTYMINFGRG) are cleaved as a signal peptide. Topologically, residues 25–546 (QNYWEHPYQK…EHKPTYDKMK (522 aa)) are extracellular. 5 disulfides stabilise this stretch: Cys-149–Cys-302, Cys-217–Cys-247, Cys-263–Cys-275, Cys-320–Cys-418, and Cys-337–Cys-409. Asn-162 is a glycosylation site (N-linked (GlcNAc...) asparagine). N-linked (GlcNAc...) asparagine glycosylation is found at Asn-286, Asn-371, Asn-421, Asn-422, and Asn-499. 3 disulfide bridges follow: Cys-443/Cys-502, Cys-490/Cys-507, and Cys-492/Cys-509. A helical membrane pass occupies residues 547 to 567 (IIIASSAAVAVLATILMVYLY). Residues 568–622 (KRKGNAEKYDKMDEPQHYGKSNSRNDEMLDPEASFWGEEKRASHTTPVLMEKPYY) lie on the Cytoplasmic side of the membrane. Over residues 578-594 (KMDEPQHYGKSNSRNDE) the composition is skewed to basic and acidic residues. The disordered stretch occupies residues 578–607 (KMDEPQHYGKSNSRNDEMLDPEASFWGEEK).

The protein belongs to the apicomplexan parasites AMA1 family.

It localises to the membrane. Functionally, involved in parasite invasion of erythrocytes. In Plasmodium falciparum (isolate FC27 / Papua New Guinea), this protein is Apical membrane antigen 1 (AMA-1).